A 199-amino-acid chain; its full sequence is Protein GrpE (199 aa).

Belongs to the GrpE family. As to quaternary structure, homodimer.

It localises to the cytoplasm. In terms of biological role, participates actively in the response to hyperosmotic and heat shock by preventing the aggregation of stress-denatured proteins, in association with DnaK and GrpE. It is the nucleotide exchange factor for DnaK and may function as a thermosensor. Unfolded proteins bind initially to DnaJ; upon interaction with the DnaJ-bound protein, DnaK hydrolyzes its bound ATP, resulting in the formation of a stable complex. GrpE releases ADP from DnaK; ATP binding to DnaK triggers the release of the substrate protein, thus completing the reaction cycle. Several rounds of ATP-dependent interactions between DnaJ, DnaK and GrpE are required for fully efficient folding. The chain is Protein GrpE from Fusobacterium nucleatum subsp. nucleatum (strain ATCC 25586 / DSM 15643 / BCRC 10681 / CIP 101130 / JCM 8532 / KCTC 2640 / LMG 13131 / VPI 4355).